The sequence spans 336 residues: TBC1 domain family member 21 (336 aa).

Positions glycine 57 to lysine 265 constitute a Rab-GAP TBC domain.

As to quaternary structure, interacts with ACTB. Interacts with ARMC12, TOMM20, DNAH7 and RAP1A. Interacts with RAB10. Expressed in round and elongated spermatids (at protein level). Expressed specifically in adult testis and very weakly in fetal brain.

It localises to the cytoplasmic vesicle. Its subcellular location is the secretory vesicle. The protein resides in the acrosome. The protein localises to the cytoplasm. It is found in the cytoskeleton. Its function is as follows. Acts as a GTPase-activating protein for Rab family protein(s). Essential for the establishment of male fertility, and is required for both the production of normal sperm number and sperm function. Plays an important role in the formation of intact mitochondria, outer dense fibers and axoneme within the sperm tail. Essential for sperm mitochondrial sheath formation and for the interactions of ARMC12 with VDAC2 and VDAC3. May be involved in acrosome formation and cytoskeletal reorganization during spermiogenesis, possibly by regulating RAB3A activity. This is TBC1 domain family member 21 (TBC1D21) from Homo sapiens (Human).